We begin with the raw amino-acid sequence, 173 residues long: Shikimate kinase (173 aa).

An ATP-binding site is contributed by Gly-16–Thr-21. Thr-20 contributes to the Mg(2+) binding site. The substrate site is built by Asp-38, Arg-62, and Gly-83. Arg-120 contributes to the ATP binding site. Residue Arg-139 coordinates substrate. Arg-156 is a binding site for ATP.

This sequence belongs to the shikimate kinase family. In terms of assembly, monomer. The cofactor is Mg(2+).

It localises to the cytoplasm. It carries out the reaction shikimate + ATP = 3-phosphoshikimate + ADP + H(+). It participates in metabolic intermediate biosynthesis; chorismate biosynthesis; chorismate from D-erythrose 4-phosphate and phosphoenolpyruvate: step 5/7. Functionally, catalyzes the specific phosphorylation of the 3-hydroxyl group of shikimic acid using ATP as a cosubstrate. The polypeptide is Shikimate kinase (Corynebacterium diphtheriae (strain ATCC 700971 / NCTC 13129 / Biotype gravis)).